The primary structure comprises 289 residues: Thymidylate synthase (289 aa).

Residues Arg21 and 150-151 (RR) each bind dUMP. Cys170 (nucleophile) is an active-site residue. DUMP-binding positions include 191–194 (RSAD), Asn202, and 232–234 (HIY). A (6R)-5,10-methylene-5,6,7,8-tetrahydrofolate-binding site is contributed by Asp194. Ala288 contributes to the (6R)-5,10-methylene-5,6,7,8-tetrahydrofolate binding site.

Belongs to the thymidylate synthase family. Bacterial-type ThyA subfamily. In terms of assembly, homodimer.

Its subcellular location is the cytoplasm. The enzyme catalyses dUMP + (6R)-5,10-methylene-5,6,7,8-tetrahydrofolate = 7,8-dihydrofolate + dTMP. Its pathway is pyrimidine metabolism; dTTP biosynthesis. Its function is as follows. Catalyzes the reductive methylation of 2'-deoxyuridine-5'-monophosphate (dUMP) to 2'-deoxythymidine-5'-monophosphate (dTMP) while utilizing 5,10-methylenetetrahydrofolate (mTHF) as the methyl donor and reductant in the reaction, yielding dihydrofolate (DHF) as a by-product. This enzymatic reaction provides an intracellular de novo source of dTMP, an essential precursor for DNA biosynthesis. The chain is Thymidylate synthase from Malacoplasma penetrans (strain HF-2) (Mycoplasma penetrans).